We begin with the raw amino-acid sequence, 226 residues long: Orotate phosphoribosyltransferase (226 aa).

5-phospho-alpha-D-ribose 1-diphosphate is bound by residues R107, K108, K111, and 133–141; that span reads EDLTTDGGS. An orotate-binding site is contributed by T137.

This sequence belongs to the purine/pyrimidine phosphoribosyltransferase family. PyrE subfamily. In terms of assembly, homodimer. It depends on Mg(2+) as a cofactor.

It catalyses the reaction orotidine 5'-phosphate + diphosphate = orotate + 5-phospho-alpha-D-ribose 1-diphosphate. It participates in pyrimidine metabolism; UMP biosynthesis via de novo pathway; UMP from orotate: step 1/2. Functionally, catalyzes the transfer of a ribosyl phosphate group from 5-phosphoribose 1-diphosphate to orotate, leading to the formation of orotidine monophosphate (OMP). The sequence is that of Orotate phosphoribosyltransferase from Dinoroseobacter shibae (strain DSM 16493 / NCIMB 14021 / DFL 12).